The sequence spans 90 residues: Probable Fe(2+)-trafficking protein (90 aa).

This sequence belongs to the Fe(2+)-trafficking protein family.

In terms of biological role, could be a mediator in iron transactions between iron acquisition and iron-requiring processes, such as synthesis and/or repair of Fe-S clusters in biosynthetic enzymes. This is Probable Fe(2+)-trafficking protein from Cupriavidus necator (strain ATCC 17699 / DSM 428 / KCTC 22496 / NCIMB 10442 / H16 / Stanier 337) (Ralstonia eutropha).